The primary structure comprises 63 residues: UPF0434 protein BAV2101 (63 aa).

Belongs to the UPF0434 family.

This is UPF0434 protein BAV2101 from Bordetella avium (strain 197N).